Reading from the N-terminus, the 91-residue chain is Small integral membrane protein 12-A (91 aa).

A helical transmembrane segment spans residues 12 to 34 (YAPYITFPVAFVVGAVGYQLEWF).

The protein belongs to the SMIM12 family.

It localises to the membrane. This is Small integral membrane protein 12-A (smim12-a) from Xenopus laevis (African clawed frog).